The following is a 596-amino-acid chain: 3-hydroxy-3-methylglutaryl-coenzyme A reductase 1 (596 aa).

The interval 1-29 (MDVRRRPVKPLYTSKDASAGEPLKQQEVS) is disordered. The next 2 membrane-spanning stretches (helical) occupy residues 41-61 (LYLTNGLFFTMFFSVMYFLLV) and 83-103 (AMVSLIASVIYLLGFFGIGFV). The tract at residues 104–183 (QSFVSRSNSD…SPIIMPALSE (80 aa)) is linker. Residues 184 to 596 (DDEEIIQSVV…YNRSIKDISK (413 aa)) form a catalytic region. Residue E278 is the Charge relay system of the active site. N342 carries an N-linked (GlcNAc...) asparagine glycan. The Charge relay system role is filled by K410. N455 carries an N-linked (GlcNAc...) asparagine glycan. The active-site Charge relay system is the D486. The Proton donor role is filled by H584. A glycan (N-linked (GlcNAc...) asparagine) is linked at N588.

The protein belongs to the HMG-CoA reductase family. As to expression, expressed in flower primordia and anthers.

It localises to the endoplasmic reticulum membrane. It catalyses the reaction (R)-mevalonate + 2 NADP(+) + CoA = (3S)-3-hydroxy-3-methylglutaryl-CoA + 2 NADPH + 2 H(+). It participates in metabolic intermediate biosynthesis; (R)-mevalonate biosynthesis; (R)-mevalonate from acetyl-CoA: step 3/3. Functionally, catalyzes the synthesis of mevalonate. The specific precursor of all isoprenoid compounds present in plants. The protein is 3-hydroxy-3-methylglutaryl-coenzyme A reductase 1 (HMG1) of Solanum tuberosum (Potato).